The following is a 107-amino-acid chain: Urease subunit beta (107 aa).

The protein belongs to the urease beta subunit family. Heterotrimer of UreA (gamma), UreB (beta) and UreC (alpha) subunits. Three heterotrimers associate to form the active enzyme.

It localises to the cytoplasm. It carries out the reaction urea + 2 H2O + H(+) = hydrogencarbonate + 2 NH4(+). It participates in nitrogen metabolism; urea degradation; CO(2) and NH(3) from urea (urease route): step 1/1. The protein is Urease subunit beta of Janthinobacterium sp. (strain Marseille) (Minibacterium massiliensis).